The sequence spans 89 residues: MIYISEFIGRHVEVIQSSNRYDVGISGQVSFETKNTFEITKGTGKVIVPKEGRIFTFDGKFKVDGSLINYRPEDRLREYRKILKKLGGN.

This sequence belongs to the eukaryotic/archaeal RNase P protein component 1 family. Consists of a catalytic RNA component and at least 4-5 protein subunits.

It localises to the cytoplasm. It catalyses the reaction Endonucleolytic cleavage of RNA, removing 5'-extranucleotides from tRNA precursor.. Functionally, part of ribonuclease P, a protein complex that generates mature tRNA molecules by cleaving their 5'-ends. This chain is Ribonuclease P protein component 1, found in Thermoplasma volcanium (strain ATCC 51530 / DSM 4299 / JCM 9571 / NBRC 15438 / GSS1).